We begin with the raw amino-acid sequence, 215 residues long: Thymidylate kinase (215 aa).

7–14 (GLDGSGKT) is an ATP binding site.

It belongs to the thymidylate kinase family.

The enzyme catalyses dTMP + ATP = dTDP + ADP. Functionally, phosphorylation of dTMP to form dTDP in both de novo and salvage pathways of dTTP synthesis. The chain is Thymidylate kinase from Mycoplasmopsis agalactiae (strain NCTC 10123 / CIP 59.7 / PG2) (Mycoplasma agalactiae).